A 281-amino-acid polypeptide reads, in one-letter code: Very long chain fatty acid elongase 7 (281 aa).

An N-acetylalanine modification is found at Ala-2. Topologically, residues Ala-2–Asp-27 are lumenal. Residues Trp-28–Val-48 traverse the membrane as a helical segment. Residues Thr-49–Lys-66 lie on the Cytoplasmic side of the membrane. The helical transmembrane segment at Val-67–Ile-87 threads the bilayer. Over Met-88–Arg-115 the chain is Lumenal. A disulfide bridge links Cys-99 with Cys-231. The helical transmembrane segment at Thr-116 to Leu-136 threads the bilayer. Residues Lys-124, Arg-137, Lys-139, Gln-142, and His-147 each contribute to the 3-oxoeicosanoyl-CoA site. At Arg-137–Gln-142 the chain is on the cytoplasmic side. Residues Val-143–Val-162 traverse the membrane as a helical segment. The short motif at His-147–His-151 is the HxxHH motif element. His-150 serves as the catalytic Nucleophile. The Lumenal portion of the chain corresponds to Lys-163–Thr-171. The helical transmembrane segment at Phe-172 to Gly-194 threads the bilayer. Tyr-187, Lys-204, Thr-208, and Gln-211 together coordinate 3-oxoeicosanoyl-CoA. The Cytoplasmic portion of the chain corresponds to Pro-195 to Tyr-206. Residues Leu-207 to Phe-227 traverse the membrane as a helical segment. The Lumenal portion of the chain corresponds to Met-228–Pro-236. A helical transmembrane segment spans residues Val-237–Trp-257. Residues Tyr-258–His-281 lie on the Cytoplasmic side of the membrane. Arg-266 contacts 3-oxoeicosanoyl-CoA. The Di-lysine motif signature appears at Lys-277–His-281.

The protein belongs to the ELO family. ELOVL7 subfamily. Homodimer. Interacts with TECR.

The protein resides in the endoplasmic reticulum membrane. The catalysed reaction is a very-long-chain acyl-CoA + malonyl-CoA + H(+) = a very-long-chain 3-oxoacyl-CoA + CO2 + CoA. It carries out the reaction eicosanoyl-CoA + malonyl-CoA + H(+) = 3-oxodocosanoyl-CoA + CO2 + CoA. The enzyme catalyses (5Z,8Z,11Z,14Z)-eicosatetraenoyl-CoA + malonyl-CoA + H(+) = (7Z,10Z,13Z,16Z)-3-oxodocosatetraenoyl-CoA + CO2 + CoA. It catalyses the reaction (6Z,9Z,12Z)-octadecatrienoyl-CoA + malonyl-CoA + H(+) = (8Z,11Z,14Z)-3-oxoeicosatrienoyl-CoA + CO2 + CoA. The catalysed reaction is (9Z,12Z)-octadecadienoyl-CoA + malonyl-CoA + H(+) = (11Z,14Z)-3-oxoicosa-11,14-dienoyl-CoA + CO2 + CoA. It carries out the reaction (9Z)-octadecenoyl-CoA + malonyl-CoA + H(+) = 3-oxo-(11Z)-eicosenoyl-CoA + CO2 + CoA. The enzyme catalyses octadecanoyl-CoA + malonyl-CoA + H(+) = 3-oxoeicosanoyl-CoA + CO2 + CoA. It catalyses the reaction hexadecanoyl-CoA + malonyl-CoA + H(+) = 3-oxooctadecanoyl-CoA + CO2 + CoA. The catalysed reaction is (9Z,12Z,15Z)-octadecatrienoyl-CoA + malonyl-CoA + H(+) = (11Z,14Z,17Z)-3-oxoeicosatrienoyl-CoA + CO2 + CoA. The protein operates within lipid metabolism; fatty acid biosynthesis. Functionally, catalyzes the first and rate-limiting reaction of the four reactions that constitute the long-chain fatty acids elongation cycle. This endoplasmic reticulum-bound enzymatic process allows the addition of 2 carbons to the chain of long- and very long-chain fatty acids (VLCFAs) per cycle. Condensing enzyme with higher activity toward C18 acyl-CoAs, especially C18:3(n-3) acyl-CoAs and C18:3(n-6)-CoAs. Also active toward C20:4-, C18:0-, C18:1-, C18:2- and C16:0-CoAs, and weakly toward C20:0-CoA. Little or no activity toward C22:0-, C24:0-, or C26:0-CoAs. May participate in the production of saturated and polyunsaturated VLCFAs of different chain lengths that are involved in multiple biological processes as precursors of membrane lipids and lipid mediators. The polypeptide is Very long chain fatty acid elongase 7 (Bos taurus (Bovine)).